The following is a 494-amino-acid chain: Sulfate adenylyltransferase subunit 1 (494 aa).

The tr-type G domain occupies 24–240 (TRPLRLITCG…LELATVRSAQ (217 aa)). Positions 33-40 (GSVDDGKS) are G1. 33 to 40 (GSVDDGKS) serves as a coordination point for GTP. The interval 91 to 95 (GITID) is G2. A G3 region spans residues 112-115 (DTPG). Residues 112-116 (DTPGH) and 167-170 (NKID) contribute to the GTP site. The tract at residues 167 to 170 (NKID) is G4. A G5 region spans residues 204-206 (SAL).

This sequence belongs to the TRAFAC class translation factor GTPase superfamily. Classic translation factor GTPase family. CysN/NodQ subfamily. Heterodimer composed of CysD, the smaller subunit, and CysN.

The catalysed reaction is sulfate + ATP + H(+) = adenosine 5'-phosphosulfate + diphosphate. The protein operates within sulfur metabolism; hydrogen sulfide biosynthesis; sulfite from sulfate: step 1/3. Functionally, with CysD forms the ATP sulfurylase (ATPS) that catalyzes the adenylation of sulfate producing adenosine 5'-phosphosulfate (APS) and diphosphate, the first enzymatic step in sulfur assimilation pathway. APS synthesis involves the formation of a high-energy phosphoric-sulfuric acid anhydride bond driven by GTP hydrolysis by CysN coupled to ATP hydrolysis by CysD. The polypeptide is Sulfate adenylyltransferase subunit 1 (Rhizobium rhizogenes (strain K84 / ATCC BAA-868) (Agrobacterium radiobacter)).